The following is a 200-amino-acid chain: Holliday junction branch migration complex subunit RuvA (200 aa).

A domain I region spans residues 1–63; sequence MIALLTGQIA…EDAILLYGFR (63 aa). The tract at residues 64–142 is domain II; it reads TRTEKSFFQL…KLDSGSIPAG (79 aa). Residues 143–153 are flexible linker; sequence DAVGRSLPAGS. The domain III stretch occupies residues 153-200; that stretch reads SVLDDVSSALVNLGYKDPQVRKVLAELDCAGSASVEEVLKQALKILMK.

It belongs to the RuvA family. In terms of assembly, homotetramer. Forms an RuvA(8)-RuvB(12)-Holliday junction (HJ) complex. HJ DNA is sandwiched between 2 RuvA tetramers; dsDNA enters through RuvA and exits via RuvB. An RuvB hexamer assembles on each DNA strand where it exits the tetramer. Each RuvB hexamer is contacted by two RuvA subunits (via domain III) on 2 adjacent RuvB subunits; this complex drives branch migration. In the full resolvosome a probable DNA-RuvA(4)-RuvB(12)-RuvC(2) complex forms which resolves the HJ.

The protein localises to the cytoplasm. In terms of biological role, the RuvA-RuvB-RuvC complex processes Holliday junction (HJ) DNA during genetic recombination and DNA repair, while the RuvA-RuvB complex plays an important role in the rescue of blocked DNA replication forks via replication fork reversal (RFR). RuvA specifically binds to HJ cruciform DNA, conferring on it an open structure. The RuvB hexamer acts as an ATP-dependent pump, pulling dsDNA into and through the RuvAB complex. HJ branch migration allows RuvC to scan DNA until it finds its consensus sequence, where it cleaves and resolves the cruciform DNA. The chain is Holliday junction branch migration complex subunit RuvA from Trichlorobacter lovleyi (strain ATCC BAA-1151 / DSM 17278 / SZ) (Geobacter lovleyi).